The primary structure comprises 478 residues: Proline--tRNA ligase (478 aa).

The protein belongs to the class-II aminoacyl-tRNA synthetase family. ProS type 3 subfamily. As to quaternary structure, homodimer.

The protein localises to the cytoplasm. It catalyses the reaction tRNA(Pro) + L-proline + ATP = L-prolyl-tRNA(Pro) + AMP + diphosphate. Catalyzes the attachment of proline to tRNA(Pro) in a two-step reaction: proline is first activated by ATP to form Pro-AMP and then transferred to the acceptor end of tRNA(Pro). In Clostridium botulinum (strain Langeland / NCTC 10281 / Type F), this protein is Proline--tRNA ligase.